We begin with the raw amino-acid sequence, 1343 residues long: DNA-directed RNA polymerase subunit beta (1343 aa).

The protein belongs to the RNA polymerase beta chain family. In terms of assembly, the RNAP catalytic core consists of 2 alpha, 1 beta, 1 beta' and 1 omega subunit. When a sigma factor is associated with the core the holoenzyme is formed, which can initiate transcription.

It catalyses the reaction RNA(n) + a ribonucleoside 5'-triphosphate = RNA(n+1) + diphosphate. DNA-dependent RNA polymerase catalyzes the transcription of DNA into RNA using the four ribonucleoside triphosphates as substrates. This Shewanella baltica (strain OS223) protein is DNA-directed RNA polymerase subunit beta.